The sequence spans 1346 residues: Adhesion G protein-coupled receptor A3 (1346 aa).

The signal sequence occupies residues 1–21; it reads MSVLCVLLLAFVLPLRGSSSA. The tract at residues 18-45 is disordered; that stretch reads SSSAGSTECKTYDERSRSAGKSSPSGAT. Residues 22–739 lie on the Extracellular side of the membrane; the sequence is GSTECKTYDE…NVFIFRPLHP (718 aa). LRR repeat units lie at residues 66–90, 91–114, 116–138, and 139–162; these read FPNR…SFVG, LSSL…AFYG, FSLK…VFKG, and LTNL…IFDS. The LRRCT domain maps to 176-223; sequence LLCDCNLQWLVVWIKEKAIGVKETRCSFPRSLQGQLITTLRAETLTCD. The 99-residue stretch at 229–327 folds into the Ig-like domain; that stretch reads PSFQMTPSQH…GNNTRTVHIV (99 aa). An intrachain disulfide couples Cys-251 to Cys-311. 3 LRR repeats span residues 503 to 529, 574 to 600, and 611 to 632; these read LQRI…ALEA, TSNL…LFSS, and VYKL…GNSS. The 166-residue stretch at 563 to 728 folds into the GAIN-B domain; the sequence is PERQLSFKCN…AVLMDLNRTG (166 aa). A GPS region spans residues 679 to 728; the sequence is PAFWNFSLQGGQGGWQSDGCRILHQDDNFTTVSCHSLNSYAVLMDLNRTG. Cys-698 and Cys-712 are oxidised to a cystine. Residues 740–760 traverse the membrane as a helical segment; the sequence is VIYSTALVLVLCLLSVIVSYI. At 761–773 the chain is on the cytoplasmic side; that stretch reads YHHKSVRISKKCW. The chain crosses the membrane as a helical span at residues 774–794; sequence HMLVNLCLHILLTCAVFVGGI. Topologically, residues 795 to 804 are extracellular; the sequence is NQTYNASVCQ. Residues 805 to 825 form a helical membrane-spanning segment; the sequence is AMGIVLHYSTLATALWSGVTA. Residues 826-854 lie on the Cytoplasmic side of the membrane; that stretch reads RNIYKQVTRKAKRYEELDEPPPPPRPMLR. A helical membrane pass occupies residues 855–875; that stretch reads FYLIGGGIPIIVCGITAAANI. Residues 876–897 lie on the Extracellular side of the membrane; the sequence is KNYGSQVNAPYCWMAWEPSLGA. The chain crosses the membrane as a helical span at residues 898 to 918; sequence FYGPAAFIVFVDCMYFLSILI. The Cytoplasmic segment spans residues 919–977; that stretch reads QLRRHPERRFELKEQSEEQQHLSVTEATEITPVHLESSPTAQPVPMSALENEHTFVSQL. Residues 978–998 traverse the membrane as a helical segment; the sequence is MGVAGSLTLYAALWVFGALAI. Residues 999 to 1005 lie on the Extracellular side of the membrane; the sequence is SQEHPAD. The chain crosses the membrane as a helical span at residues 1006 to 1026; it reads LVFACLFGALALGLGAFLVAH. At 1027–1346 the chain is on the cytoplasmic side; it reads HCVNRQDMRR…TGLWKHETTV (320 aa). A compositionally biased stretch (polar residues) spans 1157–1169; it reads SVNNNNLPGNANI. Disordered regions lie at residues 1157 to 1188 and 1202 to 1284; these read SVNN…RASR and SVEG…DGSE. Composition is skewed to basic residues over residues 1173 to 1187 and 1212 to 1226; these read PGRH…HRAS and NKRH…RNSR. Residues 1238–1252 are compositionally biased toward low complexity; the sequence is QSQLQQDSSDAASTS. Residues 1266-1280 are compositionally biased toward gly residues; the sequence is IGNGFGHGISNGGLL. The short motif at 1344–1346 is the PDZ-binding element; the sequence is TTV.

It belongs to the G-protein coupled receptor 2 family. Adhesion G-protein coupled receptor (ADGR) subfamily. As to quaternary structure, interacts (via PDZ-binding motif) with disheveled proteins; leading to the localization of dishevelled proteins to specific membrane subdomains. Ubiquitously expressed at very low levels.

The protein localises to the cell membrane. Functionally, orphan receptor that acts as a critical modulator of planar cell polarity during gastrulation. Controls the localization of dishevelled. This Danio rerio (Zebrafish) protein is Adhesion G protein-coupled receptor A3 (adgra3).